Consider the following 675-residue polypeptide: Genome polyprotein (675 aa).

The RdRp catalytic domain maps to 92-216; it reads WVYCDADGSQ…AIHPDHEHVL (125 aa). Positions 390-424 are enriched in basic and acidic residues; that stretch reads KNEAVDTGLNEKFKEKEKQKEKEKEKQKEKEKDDA. The disordered stretch occupies residues 390–447; it reads KNEAVDTGLNEKFKEKEKQKEKEKEKQKEKEKDDASDGNDVSTSTKTGERDRDVNVGT.

This sequence belongs to the potyviridae genome polyprotein family. In terms of processing, genome polyprotein of potyviruses undergoes post-translational proteolytic processing by the main proteinase NIa-pro resulting in the production of at least ten individual proteins. The P1 proteinase and the HC-pro cleave only their respective C-termini autocatalytically. 6K1 is essential for proper proteolytic separation of P3 from CI.

The protein localises to the virion. The enzyme catalyses RNA(n) + a ribonucleoside 5'-triphosphate = RNA(n+1) + diphosphate. An RNA-dependent RNA polymerase that plays an essential role in the virus replication. Functionally, involved in aphid transmission, cell-to-cell and systemis movement, encapsidation of the viral RNA and in the regulation of viral RNA amplification. This is Genome polyprotein from Papaya ringspot virus (strain W).